We begin with the raw amino-acid sequence, 208 residues long: Imidazoleglycerol-phosphate dehydratase (208 aa).

It belongs to the imidazoleglycerol-phosphate dehydratase family.

It is found in the cytoplasm. The catalysed reaction is D-erythro-1-(imidazol-4-yl)glycerol 3-phosphate = 3-(imidazol-4-yl)-2-oxopropyl phosphate + H2O. Its pathway is amino-acid biosynthesis; L-histidine biosynthesis; L-histidine from 5-phospho-alpha-D-ribose 1-diphosphate: step 6/9. This is Imidazoleglycerol-phosphate dehydratase from Paenarthrobacter aurescens (strain TC1).